Reading from the N-terminus, the 410-residue chain is Peptidase T (410 aa).

Residue histidine 79 participates in Zn(2+) binding. Aspartate 81 is an active-site residue. Residue aspartate 142 participates in Zn(2+) binding. Glutamate 176 serves as the catalytic Proton acceptor. Glutamate 177, aspartate 199, and histidine 381 together coordinate Zn(2+).

The protein belongs to the peptidase M20B family. The cofactor is Zn(2+).

It is found in the cytoplasm. The enzyme catalyses Release of the N-terminal residue from a tripeptide.. In terms of biological role, cleaves the N-terminal amino acid of tripeptides. In Bacillus cereus (strain ATCC 10987 / NRS 248), this protein is Peptidase T.